The chain runs to 354 residues: 3'-5' exonuclease (354 aa).

The segment at 1 to 120 (MERYLTKMPI…PSPEKEKPEK (120 aa)) is disordered. A compositionally biased stretch (basic and acidic residues) spans 13–50 (KANEVPKKEAFAKKETPKVARKATKTDTPKELKDKENA). Residues 59–70 (TKGRPGRPAAKR) are compositionally biased toward basic residues. Basic and acidic residues predominate over residues 71–91 (KNLDTPDVKDEKIAMEEENPP). 3 positions are modified to phosphoserine: serine 104, serine 110, and serine 112. The 3'-5' exonuclease domain maps to 149-314 (WVEKQKDDVV…GQVIYRELER (166 aa)). Mg(2+)-binding residues include aspartate 163, glutamate 165, and aspartate 301.

The protein belongs to the WRNexo family.

It localises to the nucleus. Its function is as follows. Has exonuclease activity on both single-stranded and duplex templates bearing overhangs, but not blunt ended duplex DNA, and cleaves in a 3'-5' direction. Essential for the formation of DNA replication focal centers. Has an important role in maintaining genome stability. This Drosophila sechellia (Fruit fly) protein is 3'-5' exonuclease.